The chain runs to 359 residues: Outer membrane protein assembly factor BamC (359 aa).

A signal peptide spans 1–34 (MASLFDKNSFQMTRLQKTAVAKVVGVSLIMLLAA). Cysteine 35 carries the N-palmitoyl cysteine lipid modification. Cysteine 35 is lipidated: S-diacylglycerol cysteine.

This sequence belongs to the BamC family. Part of the Bam complex, which is composed of the outer membrane protein BamA, and four lipoproteins BamB, BamC, BamD and BamE.

The protein resides in the cell outer membrane. Its function is as follows. Part of the outer membrane protein assembly complex, which is involved in assembly and insertion of beta-barrel proteins into the outer membrane. The chain is Outer membrane protein assembly factor BamC from Rahnella sp. (strain Y9602).